A 387-amino-acid polypeptide reads, in one-letter code: Patatin-12 (387 aa).

Positions 1 to 23 (MATTKSFLILIVMILATTSSTFA) are cleaved as a signal peptide. The 199-residue stretch at 32 to 230 (LSIDGGGIKG…TVGDPALLSL (199 aa)) folds into the PNPLA domain. The GXGXXG motif lies at 36 to 41 (GGGIKG). The GXSXG signature appears at 75 to 79 (GTSTG). Ser-77 acts as the Nucleophile in catalysis. A glycan (N-linked (GlcNAc...) asparagine) is linked at Asn-115. Residue Asp-216 is the Proton acceptor of the active site. Residues 216–218 (DGG) carry the DGA/G motif. Positions 322-385 (ENALTGTTTE…DRKKLRANKA (64 aa)) form a coiled coil.

Belongs to the patatin family. As to expression, tuber.

Its subcellular location is the vacuole. Its function is as follows. Probable lipolytic acyl hydrolase (LAH), an activity which is thought to be involved in the response of tubers to pathogens. The polypeptide is Patatin-12 (Solanum tuberosum (Potato)).